The following is a 432-amino-acid chain: Adenylosuccinate synthetase (432 aa).

GTP-binding positions include 13-19 and 41-43; these read GDEGKGK and GHT. The Proton acceptor role is filled by aspartate 14. Residues aspartate 14 and glycine 41 each coordinate Mg(2+). IMP-binding positions include 14–17, 39–42, threonine 130, arginine 144, glutamine 225, threonine 240, and arginine 304; these read DEGK and NAGH. Catalysis depends on histidine 42, which acts as the Proton donor. A substrate-binding site is contributed by 300–306; the sequence is ATTGRRR. GTP contacts are provided by residues arginine 306, 332–334, and 415–417; these read KLD and STG.

It belongs to the adenylosuccinate synthetase family. Homodimer. Mg(2+) is required as a cofactor.

The protein resides in the cytoplasm. It carries out the reaction IMP + L-aspartate + GTP = N(6)-(1,2-dicarboxyethyl)-AMP + GDP + phosphate + 2 H(+). It participates in purine metabolism; AMP biosynthesis via de novo pathway; AMP from IMP: step 1/2. Plays an important role in the de novo pathway of purine nucleotide biosynthesis. Catalyzes the first committed step in the biosynthesis of AMP from IMP. In Escherichia coli (strain K12), this protein is Adenylosuccinate synthetase.